We begin with the raw amino-acid sequence, 84 residues long: Small ribosomal subunit protein uS17 (84 aa).

Belongs to the universal ribosomal protein uS17 family. In terms of assembly, part of the 30S ribosomal subunit.

One of the primary rRNA binding proteins, it binds specifically to the 5'-end of 16S ribosomal RNA. This chain is Small ribosomal subunit protein uS17, found in Clostridium beijerinckii (strain ATCC 51743 / NCIMB 8052) (Clostridium acetobutylicum).